We begin with the raw amino-acid sequence, 220 residues long: UPF0319 protein YccT (220 aa).

Residues 1-20 (MKTGIVTTLIALCLPVSVFA) form the signal peptide.

This sequence belongs to the UPF0319 family.

The polypeptide is UPF0319 protein YccT (Escherichia coli O139:H28 (strain E24377A / ETEC)).